Here is a 432-residue protein sequence, read N- to C-terminus: Tol-Pal system protein TolB (432 aa).

The N-terminal stretch at Met-1–Ala-22 is a signal peptide.

The protein belongs to the TolB family. As to quaternary structure, the Tol-Pal system is composed of five core proteins: the inner membrane proteins TolA, TolQ and TolR, the periplasmic protein TolB and the outer membrane protein Pal. They form a network linking the inner and outer membranes and the peptidoglycan layer.

Its subcellular location is the periplasm. In terms of biological role, part of the Tol-Pal system, which plays a role in outer membrane invagination during cell division and is important for maintaining outer membrane integrity. The chain is Tol-Pal system protein TolB from Marinomonas sp. (strain MWYL1).